The primary structure comprises 193 residues: Dual-action ribosomal maturation protein DarP (193 aa).

Residues 1–10 show a composition bias toward basic and acidic residues; that stretch reads MRGRDEDTGE. Disordered regions lie at residues 1 to 20 and 171 to 193; these read MRGR…SQQR and QEQG…EDDE. The segment covering 181–193 has biased composition (acidic residues); sequence GLEDGESALEDDE.

Belongs to the DarP family.

The protein resides in the cytoplasm. Member of a network of 50S ribosomal subunit biogenesis factors which assembles along the 30S-50S interface, preventing incorrect 23S rRNA structures from forming. Promotes peptidyl transferase center (PTC) maturation. The sequence is that of Dual-action ribosomal maturation protein DarP from Xanthomonas oryzae pv. oryzae (strain MAFF 311018).